The sequence spans 133 residues: Small ribosomal subunit protein eS8 (133 aa).

Residues 1 to 31 form a disordered region; that stretch reads MGFYQGPDNRKITGGLKGKHRDKRKYEIGNP.

This sequence belongs to the eukaryotic ribosomal protein eS8 family. In terms of assembly, part of the 30S ribosomal subunit.

The chain is Small ribosomal subunit protein eS8 from Saccharolobus solfataricus (strain ATCC 35092 / DSM 1617 / JCM 11322 / P2) (Sulfolobus solfataricus).